The following is a 280-amino-acid chain: 4-deoxy-L-threo-5-hexosulose-uronate ketol-isomerase (280 aa).

Zn(2+)-binding residues include His198, His200, Glu205, and His247.

Belongs to the KduI family. Zn(2+) serves as cofactor.

The protein resides in the cytoplasm. The enzyme catalyses 5-dehydro-4-deoxy-D-glucuronate = 3-deoxy-D-glycero-2,5-hexodiulosonate. Its function is as follows. Isomerase involved in ulvan degradation. Ulvan is the main polysaccharide component of the Ulvales (green seaweed) cell wall. It is composed of disaccharide building blocks comprising 3-sulfated rhamnose (Rha3S) linked to D-glucuronic acid (GlcA), L-iduronic acid (IduA), or D-xylose (Xyl). Catalyzes the isomerization of 5-dehydro-4-deoxy-D-glucuronate to 3-deoxy-D-glycero-2,5-hexodiulosonate. The polypeptide is 4-deoxy-L-threo-5-hexosulose-uronate ketol-isomerase (Formosa agariphila (strain DSM 15362 / KCTC 12365 / LMG 23005 / KMM 3901 / M-2Alg 35-1)).